Consider the following 251-residue polypeptide: Imidazole glycerol phosphate synthase subunit HisF (251 aa).

Residues aspartate 11 and aspartate 130 contribute to the active site.

Belongs to the HisA/HisF family. Heterodimer of HisH and HisF.

It localises to the cytoplasm. It catalyses the reaction 5-[(5-phospho-1-deoxy-D-ribulos-1-ylimino)methylamino]-1-(5-phospho-beta-D-ribosyl)imidazole-4-carboxamide + L-glutamine = D-erythro-1-(imidazol-4-yl)glycerol 3-phosphate + 5-amino-1-(5-phospho-beta-D-ribosyl)imidazole-4-carboxamide + L-glutamate + H(+). It participates in amino-acid biosynthesis; L-histidine biosynthesis; L-histidine from 5-phospho-alpha-D-ribose 1-diphosphate: step 5/9. Its function is as follows. IGPS catalyzes the conversion of PRFAR and glutamine to IGP, AICAR and glutamate. The HisF subunit catalyzes the cyclization activity that produces IGP and AICAR from PRFAR using the ammonia provided by the HisH subunit. In Flavobacterium johnsoniae (strain ATCC 17061 / DSM 2064 / JCM 8514 / BCRC 14874 / CCUG 350202 / NBRC 14942 / NCIMB 11054 / UW101) (Cytophaga johnsonae), this protein is Imidazole glycerol phosphate synthase subunit HisF.